Here is a 359-residue protein sequence, read N- to C-terminus: Phosphoserine aminotransferase (359 aa).

Arginine 41 is a binding site for L-glutamate. Pyridoxal 5'-phosphate is bound by residues 75-76 (AS), tryptophan 101, threonine 152, aspartate 171, and glutamine 194. N6-(pyridoxal phosphate)lysine is present on lysine 195. Residue 236–237 (NT) coordinates pyridoxal 5'-phosphate.

This sequence belongs to the class-V pyridoxal-phosphate-dependent aminotransferase family. SerC subfamily. Homodimer. The cofactor is pyridoxal 5'-phosphate.

It localises to the cytoplasm. It carries out the reaction O-phospho-L-serine + 2-oxoglutarate = 3-phosphooxypyruvate + L-glutamate. The enzyme catalyses 4-(phosphooxy)-L-threonine + 2-oxoglutarate = (R)-3-hydroxy-2-oxo-4-phosphooxybutanoate + L-glutamate. It participates in amino-acid biosynthesis; L-serine biosynthesis; L-serine from 3-phospho-D-glycerate: step 2/3. The protein operates within cofactor biosynthesis; pyridoxine 5'-phosphate biosynthesis; pyridoxine 5'-phosphate from D-erythrose 4-phosphate: step 3/5. Functionally, catalyzes the reversible conversion of 3-phosphohydroxypyruvate to phosphoserine and of 3-hydroxy-2-oxo-4-phosphonooxybutanoate to phosphohydroxythreonine. This Acinetobacter baumannii (strain ACICU) protein is Phosphoserine aminotransferase.